The chain runs to 252 residues: ATP synthase subunit a (252 aa).

Helical transmembrane passes span 29-49 (FTNV…FLFI), 87-107 (FFPL…IGLF), 117-137 (IMIT…YGFY), 146-166 (LFVP…IEVI), 196-216 (FIVS…LPLI), and 219-239 (VAIT…FTVL).

The protein belongs to the ATPase A chain family. In terms of assembly, F-type ATPases have 2 components, CF(1) - the catalytic core - and CF(0) - the membrane proton channel. CF(1) has five subunits: alpha(3), beta(3), gamma(1), delta(1), epsilon(1). CF(0) has three main subunits: a(1), b(2) and c(9-12). The alpha and beta chains form an alternating ring which encloses part of the gamma chain. CF(1) is attached to CF(0) by a central stalk formed by the gamma and epsilon chains, while a peripheral stalk is formed by the delta and b chains.

The protein localises to the cell inner membrane. Key component of the proton channel; it plays a direct role in the translocation of protons across the membrane. This chain is ATP synthase subunit a, found in Bartonella henselae (strain ATCC 49882 / DSM 28221 / CCUG 30454 / Houston 1) (Rochalimaea henselae).